The sequence spans 470 residues: Putative dipeptidase TSTA_079200 (470 aa).

A helical transmembrane segment spans residues 40–60 (AWLFGLGTLGIILASVLLNPF). Zn(2+) is bound by residues H92 and D94. The cysteines at positions 143 and 237 are disulfide-linked. The N-linked (GlcNAc...) asparagine glycan is linked to N188. E208 serves as a coordination point for Zn(2+). H235 contributes to the substrate binding site. 2 residues coordinate Zn(2+): H279 and H300. 2 residues coordinate substrate: R311 and D371.

The protein belongs to the metallo-dependent hydrolases superfamily. Peptidase M19 family. Zn(2+) is required as a cofactor.

The protein localises to the membrane. The catalysed reaction is an L-aminoacyl-L-amino acid + H2O = 2 an L-alpha-amino acid. Hydrolyzes a wide range of dipeptides. This Talaromyces stipitatus (strain ATCC 10500 / CBS 375.48 / QM 6759 / NRRL 1006) (Penicillium stipitatum) protein is Putative dipeptidase TSTA_079200.